Consider the following 224-residue polypeptide: uncharacterized protein (224 aa).

The helical transmembrane segment at 21–41 (LTVILIIPIVYLGVCGCFEIV) threads the bilayer.

Its subcellular location is the membrane. This is an uncharacterized protein from Methanocaldococcus jannaschii (strain ATCC 43067 / DSM 2661 / JAL-1 / JCM 10045 / NBRC 100440) (Methanococcus jannaschii).